We begin with the raw amino-acid sequence, 162 residues long: MYNKVILVGNLTRDVELRYLPSGSALAKIGIATNRRFKKQDGSQGDEVCFVDVNLFGRTAEIANQYLKKGSKILIEGRLVLESWTDQSGQKRSKHSVTAESLQMLDSKGASQGGYEGEDYSSYDSTPSYGATSSAKSAPNTQAPYKEPQIPEINIDDDEIPF.

In terms of domain architecture, SSB spans 1–106; that stretch reads MYNKVILVGN…VTAESLQMLD (106 aa). Polar residues-rich tracts occupy residues 85-101 and 122-143; these read TDQSGQKRSKHSVTAES and SYDSTPSYGATSSAKSAPNTQA. The interval 85 to 162 is disordered; sequence TDQSGQKRSK…INIDDDEIPF (78 aa). An Important for interaction with partner proteins motif is present at residues 157-162; it reads DDEIPF.

As to quaternary structure, homotetramer.

Functionally, plays an important role in DNA replication, recombination and repair. Binds to ssDNA and to an array of partner proteins to recruit them to their sites of action during DNA metabolism. In Wolinella succinogenes (strain ATCC 29543 / DSM 1740 / CCUG 13145 / JCM 31913 / LMG 7466 / NCTC 11488 / FDC 602W) (Vibrio succinogenes), this protein is Single-stranded DNA-binding protein (ssb).